Consider the following 99-residue polypeptide: Aspartyl/glutamyl-tRNA(Asn/Gln) amidotransferase subunit C (99 aa).

This sequence belongs to the GatC family. As to quaternary structure, heterotrimer of A, B and C subunits.

The enzyme catalyses L-glutamyl-tRNA(Gln) + L-glutamine + ATP + H2O = L-glutaminyl-tRNA(Gln) + L-glutamate + ADP + phosphate + H(+). It catalyses the reaction L-aspartyl-tRNA(Asn) + L-glutamine + ATP + H2O = L-asparaginyl-tRNA(Asn) + L-glutamate + ADP + phosphate + 2 H(+). Functionally, allows the formation of correctly charged Asn-tRNA(Asn) or Gln-tRNA(Gln) through the transamidation of misacylated Asp-tRNA(Asn) or Glu-tRNA(Gln) in organisms which lack either or both of asparaginyl-tRNA or glutaminyl-tRNA synthetases. The reaction takes place in the presence of glutamine and ATP through an activated phospho-Asp-tRNA(Asn) or phospho-Glu-tRNA(Gln). This chain is Aspartyl/glutamyl-tRNA(Asn/Gln) amidotransferase subunit C, found in Rhodococcus erythropolis (strain PR4 / NBRC 100887).